A 236-amino-acid polypeptide reads, in one-letter code: uncharacterized protein (236 aa).

Disordered regions lie at residues 1-48 (MHLR…RTFS), 67-122 (VHTP…HSPR), and 134-192 (KLHP…PNNT). A compositionally biased stretch (basic residues) spans 85–99 (RAHRTAKHPARRQSC). Pro residues predominate over residues 180-189 (PSPAIKPSPP).

This is an uncharacterized protein from Encephalitozoon cuniculi (strain GB-M1) (Microsporidian parasite).